The sequence spans 133 residues: Small ribosomal subunit protein uS11 (133 aa).

This sequence belongs to the universal ribosomal protein uS11 family. As to quaternary structure, part of the 30S ribosomal subunit.

Located on the platform of the 30S subunit. In Pyrobaculum aerophilum (strain ATCC 51768 / DSM 7523 / JCM 9630 / CIP 104966 / NBRC 100827 / IM2), this protein is Small ribosomal subunit protein uS11.